Consider the following 186-residue polypeptide: Lipoprotein signal peptidase (186 aa).

3 consecutive transmembrane segments (helical) span residues 11–31 (WIPL…KLLV), 44–64 (VLGD…FSIG), and 70–90 (VLRT…IVFS). Active-site residues include D128 and D150. Residues 145 to 165 (AFNIADAVIMTCGLLLIISFI) form a helical membrane-spanning segment.

The protein belongs to the peptidase A8 family.

The protein localises to the cell inner membrane. The catalysed reaction is Release of signal peptides from bacterial membrane prolipoproteins. Hydrolyzes -Xaa-Yaa-Zaa-|-(S,diacylglyceryl)Cys-, in which Xaa is hydrophobic (preferably Leu), and Yaa (Ala or Ser) and Zaa (Gly or Ala) have small, neutral side chains.. It participates in protein modification; lipoprotein biosynthesis (signal peptide cleavage). In terms of biological role, this protein specifically catalyzes the removal of signal peptides from prolipoproteins. This chain is Lipoprotein signal peptidase, found in Treponema pallidum (strain Nichols).